The primary structure comprises 53 residues: Small, acid-soluble spore protein K (53 aa).

The segment at 1–53 is disordered; it reads MRNKEHNFPNQNNNKFEGEPRAKSEYASKRADGTTNTHPQERMRASGERSDFF. 2 stretches are compositionally biased toward basic and acidic residues: residues 16-32 and 39-53; these read FEGE…KRAD and PQER…SDFF.

Belongs to the SspK family.

The protein localises to the spore core. The polypeptide is Small, acid-soluble spore protein K (Geobacillus thermodenitrificans (strain NG80-2)).